The sequence spans 323 residues: Ubiquinone biosynthesis protein COQ4, mitochondrial (323 aa).

The transit peptide at 1–29 directs the protein to the mitochondrion; that stretch reads MLKSTVSNTRIKCCRIDQRRNYLFTALAS. Residues His-205, Asp-206, His-209, and Glu-221 each contribute to the Zn(2+) site.

The protein belongs to the COQ4 family. Component of a multi-subunit COQ enzyme complex, composed of at least COQ3, COQ4, COQ5, COQ6, COQ7 and COQ9. It depends on Zn(2+) as a cofactor.

Its subcellular location is the mitochondrion inner membrane. The catalysed reaction is a 4-hydroxy-3-methoxy-5-(all-trans-polyprenyl)benzoate + H(+) = a 2-methoxy-6-(all-trans-polyprenyl)phenol + CO2. Its pathway is cofactor biosynthesis; ubiquinone biosynthesis. Its function is as follows. Lyase that catalyzes the C1-decarboxylation of 4-hydroxy-3-methoxy-5-(all-trans-polyprenyl)benzoic acid into 2-methoxy-6-(all-trans-polyprenyl)phenol during ubiquinone biosynthesis. The polypeptide is Ubiquinone biosynthesis protein COQ4, mitochondrial (Candida dubliniensis (strain CD36 / ATCC MYA-646 / CBS 7987 / NCPF 3949 / NRRL Y-17841) (Yeast)).